Here is a 411-residue protein sequence, read N- to C-terminus: Protein BTN1 (411 aa).

The signal sequence occupies residues 1–29; that stretch reads MNSKQRVYAFFWIFGLVNNVLYVVILSAA. Helical transmembrane passes span 41–61, 79–99, 127–147, 149–169, 281–300, 307–329, 334–356, and 371–391; these read LVLLMDITPSLLIKVTAPFFI, IGMIFVSGKSLLLCMIGIAMA, SGTGGAGIVGSSVYMLLTSIF, LPIRLSLLSFTILPFAFLLYF, YVTYGTLYQLGVFISRSLAH, LYFLSALQGLNLVLTILQAWIYI, WPIMILIFYEGLLGGSSYVNTFL, and LGAVSIADSLGVFIAALVGLG.

Belongs to the battenin family.

The protein resides in the vacuole membrane. Involved in vacuolar transport and vacuole pH homeostasis. Also required for cytokinesis. This Candida glabrata (strain ATCC 2001 / BCRC 20586 / JCM 3761 / NBRC 0622 / NRRL Y-65 / CBS 138) (Yeast) protein is Protein BTN1 (BTN1).